The following is a 517-amino-acid chain: NADH-quinone oxidoreductase subunit N (517 aa).

The next 14 helical transmembrane spans lie at 14–34, 40–60, 77–97, 131–151, 154–174, 189–209, 238–258, 272–292, 306–326, 334–354, 362–382, 404–424, 451–471, and 481–501; these read LAPT…EAFV, HMVQ…MVVV, GPAL…LLLI, ATEV…FVAA, LLTM…LCAL, YFLL…LVYG, VLLF…AAAA, PTPI…GALL, FTPI…VLAV, LLAY…LAPS, MFYL…VTLV, FYAG…LTSG, SMVL…SEPG, and GWLT…LGVV.

It belongs to the complex I subunit 2 family. As to quaternary structure, NDH-1 is composed of 14 different subunits. Subunits NuoA, H, J, K, L, M, N constitute the membrane sector of the complex.

Its subcellular location is the cell membrane. The enzyme catalyses a quinone + NADH + 5 H(+)(in) = a quinol + NAD(+) + 4 H(+)(out). NDH-1 shuttles electrons from NADH, via FMN and iron-sulfur (Fe-S) centers, to quinones in the respiratory chain. The immediate electron acceptor for the enzyme in this species is believed to be a menaquinone. Couples the redox reaction to proton translocation (for every two electrons transferred, four hydrogen ions are translocated across the cytoplasmic membrane), and thus conserves the redox energy in a proton gradient. In Salinispora arenicola (strain CNS-205), this protein is NADH-quinone oxidoreductase subunit N.